Reading from the N-terminus, the 155-residue chain is Ribosomal RNA large subunit methyltransferase H (155 aa).

Residues Leu72, Gly103, and 122–127 (LSALTL) each bind S-adenosyl-L-methionine.

It belongs to the RNA methyltransferase RlmH family. As to quaternary structure, homodimer.

The protein resides in the cytoplasm. The catalysed reaction is pseudouridine(1915) in 23S rRNA + S-adenosyl-L-methionine = N(3)-methylpseudouridine(1915) in 23S rRNA + S-adenosyl-L-homocysteine + H(+). Functionally, specifically methylates the pseudouridine at position 1915 (m3Psi1915) in 23S rRNA. This Enterobacter sp. (strain 638) protein is Ribosomal RNA large subunit methyltransferase H.